The chain runs to 354 residues: Trans-L-3-hydroxyproline dehydratase (354 aa).

Cys104 (proton acceptor) is an active-site residue. Substrate is bound by residues 105–106 (GH), Asp269, and 274–275 (GS).

It belongs to the proline racemase family. In terms of assembly, homodimer.

The enzyme catalyses trans-3-hydroxy-L-proline = 1-pyrroline-2-carboxylate + H2O. Catalyzes the dehydration of trans-3-hydroxy-L-proline to delta-1-pyrroline-2-carboxylate (Pyr2C). This chain is Trans-L-3-hydroxyproline dehydratase (L3hypdh), found in Mus musculus (Mouse).